A 201-amino-acid chain; its full sequence is Translation machinery-associated protein 22 (201 aa).

Residues 104–175 form the SUI1 domain; sequence VTVKRIERNK…EIKEFIVEKY (72 aa).

This sequence belongs to the DENR family. Interacts with the 40S ribosomal subunit.

The protein localises to the cytoplasm. The sequence is that of Translation machinery-associated protein 22 (TMA22) from Pyricularia oryzae (strain 70-15 / ATCC MYA-4617 / FGSC 8958) (Rice blast fungus).